The following is a 322-amino-acid chain: Quinolinate synthase (322 aa).

2 residues coordinate iminosuccinate: His-38 and Ser-55. Cys-100 lines the [4Fe-4S] cluster pocket. Residues 126-128 (YIN) and Ser-143 each bind iminosuccinate. Residue Cys-186 coordinates [4Fe-4S] cluster. Iminosuccinate contacts are provided by residues 212–214 (HPE) and Thr-229. A [4Fe-4S] cluster-binding site is contributed by Cys-279.

Belongs to the quinolinate synthase family. Type 2 subfamily. [4Fe-4S] cluster serves as cofactor.

The protein resides in the cytoplasm. The catalysed reaction is iminosuccinate + dihydroxyacetone phosphate = quinolinate + phosphate + 2 H2O + H(+). The protein operates within cofactor biosynthesis; NAD(+) biosynthesis; quinolinate from iminoaspartate: step 1/1. Catalyzes the condensation of iminoaspartate with dihydroxyacetone phosphate to form quinolinate. This Cyanothece sp. (strain PCC 7425 / ATCC 29141) protein is Quinolinate synthase.